The primary structure comprises 272 residues: Orotidine 5'-phosphate decarboxylase (272 aa).

K95 serves as the catalytic Proton donor.

Belongs to the OMP decarboxylase family. Type 2 subfamily.

It catalyses the reaction orotidine 5'-phosphate + H(+) = UMP + CO2. Its pathway is pyrimidine metabolism; UMP biosynthesis via de novo pathway; UMP from orotate: step 2/2. This is Orotidine 5'-phosphate decarboxylase from Cupriavidus taiwanensis (strain DSM 17343 / BCRC 17206 / CCUG 44338 / CIP 107171 / LMG 19424 / R1) (Ralstonia taiwanensis (strain LMG 19424)).